Consider the following 719-residue polypeptide: DNA ligase (719 aa).

NAD(+)-binding positions include 42–46 (DAAYD), 92–93 (SL), and glutamate 126. Lysine 128 (N6-AMP-lysine intermediate) is an active-site residue. NAD(+) contacts are provided by arginine 149, glutamate 185, lysine 301, and lysine 325. 4 residues coordinate Zn(2+): cysteine 430, cysteine 433, cysteine 448, and cysteine 454. In terms of domain architecture, BRCT spans 640-719 (ATGSPVEGKT…DDWFKLVGED (80 aa)).

The protein belongs to the NAD-dependent DNA ligase family. LigA subfamily. It depends on Mg(2+) as a cofactor. Requires Mn(2+) as cofactor.

It catalyses the reaction NAD(+) + (deoxyribonucleotide)n-3'-hydroxyl + 5'-phospho-(deoxyribonucleotide)m = (deoxyribonucleotide)n+m + AMP + beta-nicotinamide D-nucleotide.. Functionally, DNA ligase that catalyzes the formation of phosphodiester linkages between 5'-phosphoryl and 3'-hydroxyl groups in double-stranded DNA using NAD as a coenzyme and as the energy source for the reaction. It is essential for DNA replication and repair of damaged DNA. The sequence is that of DNA ligase from Brucella melitensis biotype 1 (strain ATCC 23456 / CCUG 17765 / NCTC 10094 / 16M).